Consider the following 364-residue polypeptide: MLTFPLINDTSRKIIHIDMDAFFASVEVRDNPSLKGKPVVIARNPLQTGGRGVVSTCSYEARAFGIHSAMSAKEAYDLCPQAIFISGNYEKYTKVSKQVREIFKRYTDNIEAASIDEAYLDVTENKIGAQSAIKIAKLIQHDIFVELGLTCSAGVSYNKFLAKIASDYEKPHGLTLIMPDEALEFLAKLPVEKFHGVGKATVPKLHALGFFTGGDLQKADPVDLAEKFGIYGWELFQKANGIHNSKVKNHRERKSVGKERTYGKLLYLPDDIKAELIKISKQVSESLKRHQLKGNIIILKLRYSDFTTLTKRKSMVENLDSPEDIAEAAQQIFEEIDYDESLGVRLLGVTVSGFGVQKATLDMQ.

In terms of domain architecture, UmuC spans 14–198; that stretch reads IIHIDMDAFF…LPVEKFHGVG (185 aa). Mg(2+)-binding residues include Asp-18 and Asp-116. Glu-117 is a catalytic residue.

It belongs to the DNA polymerase type-Y family. In terms of assembly, monomer. Mg(2+) serves as cofactor.

It localises to the cytoplasm. It catalyses the reaction DNA(n) + a 2'-deoxyribonucleoside 5'-triphosphate = DNA(n+1) + diphosphate. In terms of biological role, poorly processive, error-prone DNA polymerase involved in untargeted mutagenesis. Copies undamaged DNA at stalled replication forks, which arise in vivo from mismatched or misaligned primer ends. These misaligned primers can be extended by PolIV. Exhibits no 3'-5' exonuclease (proofreading) activity. May be involved in translesional synthesis, in conjunction with the beta clamp from PolIII. The protein is DNA polymerase IV of Lactococcus lactis subsp. cremoris (strain SK11).